Here is a 1898-residue protein sequence, read N- to C-terminus: Receptor-type tyrosine-protein phosphatase F (1898 aa).

Residues 1 to 29 form the signal peptide; sequence MAPEPAPGRRMVPLVPALVMLGLMAGAHG. Residues 30–1254 lie on the Extracellular side of the membrane; the sequence is DSKPVFVKVP…QQQEEPEMLW (1225 aa). 3 consecutive Ig-like C2-type domains span residues 33 to 123, 135 to 224, and 232 to 314; these read PVFV…AKLS, PTID…ANLY, and PRFS…AQVT. Residues cysteine 54 and cysteine 107 are joined by a disulfide bond. 68 to 77 contributes to the heparin binding site; the sequence is KKGKKVSSQR. A glycan (N-linked (GlcNAc...) asparagine) is linked at asparagine 117. Cysteine 156 and cysteine 207 are disulfide-bonded. Residues asparagine 250 and asparagine 295 are each glycosylated (N-linked (GlcNAc...) asparagine). Cysteine 253 and cysteine 298 are disulfide-bonded. 8 consecutive Fibronectin type-III domains span residues 321–411, 416–510, 514–604, 609–706, 711–810, 811–905, 909–1001, and 1005–1089; these read PPID…TGEQ, PPRR…TQQG, QPAD…TAQS, PPQK…TDED, PPRK…TTGA, VPGR…PEDA, FPQN…TMPM, and FAKN…TAPD. Residues 693–713 are disordered; that stretch reads GPESSPVLVRTDEDVPSGPPR. Residue asparagine 721 is glycosylated (N-linked (GlcNAc...) asparagine). Asparagine 941 and asparagine 957 each carry an N-linked (GlcNAc...) asparagine glycan. Residues 1255–1275 form a helical membrane-spanning segment; it reads VTGPVLAVILIILIVIAILLF. Residues 1276–1898 lie on the Cytoplasmic side of the membrane; the sequence is KRKRTHSPSS…YLGSFDHYAT (623 aa). The residue at position 1296 (serine 1296) is a Phosphoserine. Tyrosine-protein phosphatase domains are found at residues 1343–1598 and 1630–1889; these read FSQE…LLEA and MELE…ALEY. Residues aspartate 1507, 1539 to 1545, and glutamine 1583 each bind substrate; that span reads CSAGVGR. Cysteine 1539 functions as the Phosphocysteine intermediate in the catalytic mechanism. Cysteine 1830 (phosphocysteine intermediate) is an active-site residue.

It belongs to the protein-tyrosine phosphatase family. Receptor class 2A subfamily. In terms of assembly, interacts with GRIP1. Interacts with PPFIA1, PPFIA2 and PPFIA3. Interacts with PTPRF.

It is found in the membrane. It carries out the reaction O-phospho-L-tyrosyl-[protein] + H2O = L-tyrosyl-[protein] + phosphate. Its function is as follows. Possible cell adhesion receptor. It possesses an intrinsic protein tyrosine phosphatase activity (PTPase) and dephosphorylates EPHA2 regulating its activity. In terms of biological role, the first PTPase domain has enzymatic activity, while the second one seems to affect the substrate specificity of the first one. This Rattus norvegicus (Rat) protein is Receptor-type tyrosine-protein phosphatase F (Ptprf).